A 184-amino-acid polypeptide reads, in one-letter code: Antigen Sm21.7 (184 aa).

The region spanning 37–72 (LDMKQVNEWIALFDVDKDQKITFEEFCRGLGLKQNE) is the EF-hand domain. 5 residues coordinate Ca(2+): Asp50, Asp52, Asp54, Lys56, and Glu61.

The sequence is that of Antigen Sm21.7 (SM21.7) from Schistosoma mansoni (Blood fluke).